We begin with the raw amino-acid sequence, 476 residues long: Aspartyl/glutamyl-tRNA(Asn/Gln) amidotransferase subunit B (476 aa).

Belongs to the GatB/GatE family. GatB subfamily. Heterotrimer of A, B and C subunits.

It catalyses the reaction L-glutamyl-tRNA(Gln) + L-glutamine + ATP + H2O = L-glutaminyl-tRNA(Gln) + L-glutamate + ADP + phosphate + H(+). It carries out the reaction L-aspartyl-tRNA(Asn) + L-glutamine + ATP + H2O = L-asparaginyl-tRNA(Asn) + L-glutamate + ADP + phosphate + 2 H(+). In terms of biological role, allows the formation of correctly charged Asn-tRNA(Asn) or Gln-tRNA(Gln) through the transamidation of misacylated Asp-tRNA(Asn) or Glu-tRNA(Gln) in organisms which lack either or both of asparaginyl-tRNA or glutaminyl-tRNA synthetases. The reaction takes place in the presence of glutamine and ATP through an activated phospho-Asp-tRNA(Asn) or phospho-Glu-tRNA(Gln). The polypeptide is Aspartyl/glutamyl-tRNA(Asn/Gln) amidotransferase subunit B (Clostridium botulinum (strain Kyoto / Type A2)).